The chain runs to 171 residues: Ribosome maturation factor RimM (171 aa).

In terms of domain architecture, PRC barrel spans 98 to 170; it reads EGEFYLHQII…AVQVSVPEGL (73 aa).

This sequence belongs to the RimM family. Binds ribosomal protein uS19.

The protein localises to the cytoplasm. Functionally, an accessory protein needed during the final step in the assembly of 30S ribosomal subunit, possibly for assembly of the head region. Essential for efficient processing of 16S rRNA. May be needed both before and after RbfA during the maturation of 16S rRNA. It has affinity for free ribosomal 30S subunits but not for 70S ribosomes. In Pediococcus pentosaceus (strain ATCC 25745 / CCUG 21536 / LMG 10740 / 183-1w), this protein is Ribosome maturation factor RimM.